Reading from the N-terminus, the 478-residue chain is Cytochrome P450 monooxygenase ATR3 (478 aa).

A helical transmembrane segment spans residues alanine 20–leucine 42. N-linked (GlcNAc...) asparagine glycans are attached at residues asparagine 159 and asparagine 268.

It belongs to the cytochrome P450 family. Heme serves as cofactor.

The protein localises to the membrane. It participates in mycotoxin biosynthesis. Cytochrome P450 monooxygenase; part of the core atranone cluster (CAC) which products are predicted to catalyze most or all steps of mycotoxin atranone synthesis, starting from geranylgeranyl pyrophosphate (GGPP). The initial cyclization of GGPP to dolabellane is probably performed by the terpene cyclase ATR13. The Baeyer-Villiger oxidation near the end of the atranone synthesis, which converts atranones D and E to atranones F and G is predicted to be catalyzed by the monooxygenase ATR8. Of the CAC's other predicted gene products, the reducing PKS ATR6 might synthesize a polyketide chain. This polyketide is probably transferred onto the atranone backbone by the polyketide transferase ATR5. Other predicted CAC products include 4 oxygenases (ATR2, ATR3, ATR4, and ATR14), 3 short-chain reductases (ATR7, ATR9, and ATR10), and a methyltransferase (ATR12). These may all be involved in the various steps of atranone biosynthesis, although their specific roles must await experimental determination. The polypeptide is Cytochrome P450 monooxygenase ATR3 (Stachybotrys chlorohalonatus (strain IBT 40285)).